Here is an 834-residue protein sequence, read N- to C-terminus: Phenylalanine--tRNA ligase beta subunit (834 aa).

The region spanning G48 to N159 is the tRNA-binding domain. The 82-residue stretch at P411–S492 folds into the B5 domain. Mg(2+) contacts are provided by D470, D476, E479, and E480. The 94-residue stretch at S740–R833 folds into the FDX-ACB domain.

It belongs to the phenylalanyl-tRNA synthetase beta subunit family. Type 1 subfamily. In terms of assembly, tetramer of two alpha and two beta subunits. Mg(2+) is required as a cofactor.

Its subcellular location is the cytoplasm. The catalysed reaction is tRNA(Phe) + L-phenylalanine + ATP = L-phenylalanyl-tRNA(Phe) + AMP + diphosphate + H(+). The polypeptide is Phenylalanine--tRNA ligase beta subunit (Nocardia farcinica (strain IFM 10152)).